The chain runs to 120 residues: U13-lycotoxin-Ls1a (120 aa).

The signal sequence occupies residues 1 to 16; it reads MKILFVLISILHAVYC. Residues 17–54 constitute a propeptide that is removed on maturation; the sequence is FSSEEDVDSAYLANELEPVEDINSEQYAALEPKEEHER. Disulfide bonds link cysteine 56-cysteine 70, cysteine 63-cysteine 76, cysteine 69-cysteine 87, and cysteine 78-cysteine 85. Residues 56 to 95 form the Agouti domain; it reads CADMGQDCKDDCDCCLNIATCNCWFGRYFCSCTFGDYQTC.

This sequence belongs to the neurotoxin 05 (agouti) family. Post-translationally, contains 6 disulfide bonds. As to expression, expressed by the venom gland.

The protein resides in the secreted. The chain is U13-lycotoxin-Ls1a from Lycosa singoriensis (Wolf spider).